The sequence spans 312 residues: MVLTIRAILWVTLITIISLEFIIGILGNVFIALVNIIDWVKRGKISAVDKTYMALAISRTAFLLSLITGFLVSLLDPALLGMRTMVRLLTISWMVTNHFSVWFATCLSIFYFLKIANFSNSIFLVLKWEAKKVVSVTLVVSVIILIMNIIVINKFTDRLQVNTLQNCSTSNTLKDYGLFLFISTGFTLTPFAVSLTMFLLLIFSLWRHLKNMCHSATGSRDVSTVAHIKGLQTVVTFLLLYTAFVMSLLSESLNINIQHTNLLSHFLRSIGVAFPTGHSCVLILGNSKLRQASLSVILWLRYKYKHIENWGP.

The Extracellular segment spans residues 1–6 (MVLTIR). The chain crosses the membrane as a helical span at residues 7 to 27 (AILWVTLITIISLEFIIGILG). The Cytoplasmic portion of the chain corresponds to 28 to 61 (NVFIALVNIIDWVKRGKISAVDKTYMALAISRTA). A helical membrane pass occupies residues 62 to 82 (FLLSLITGFLVSLLDPALLGM). At 83–92 (RTMVRLLTIS) the chain is on the extracellular side. The helical transmembrane segment at 93-113 (WMVTNHFSVWFATCLSIFYFL) threads the bilayer. Residues 114 to 132 (KIANFSNSIFLVLKWEAKK) lie on the Cytoplasmic side of the membrane. A helical transmembrane segment spans residues 133–153 (VVSVTLVVSVIILIMNIIVIN). Residues 154-185 (KFTDRLQVNTLQNCSTSNTLKDYGLFLFISTG) lie on the Extracellular side of the membrane. N166 carries an N-linked (GlcNAc...) asparagine glycan. Residues 186–206 (FTLTPFAVSLTMFLLLIFSLW) traverse the membrane as a helical segment. At 207 to 229 (RHLKNMCHSATGSRDVSTVAHIK) the chain is on the cytoplasmic side. The chain crosses the membrane as a helical span at residues 230-250 (GLQTVVTFLLLYTAFVMSLLS). Over 251–264 (ESLNINIQHTNLLS) the chain is Extracellular. The chain crosses the membrane as a helical span at residues 265–285 (HFLRSIGVAFPTGHSCVLILG). Over 286–312 (NSKLRQASLSVILWLRYKYKHIENWGP) the chain is Cytoplasmic.

Belongs to the G-protein coupled receptor T2R family. As to expression, expressed in subsets of taste receptor cells of the tongue and palate epithelium and exclusively in gustducin-positive cells. Expressed in 15% taste bud cells in circumvallate and foliate papillae but only in 2% in fungiform papillae.

The protein localises to the membrane. Functionally, gustducin-coupled receptor implicated in the perception of bitter compounds in the oral cavity and the gastrointestinal tract. Signals through PLCB2 and the calcium-regulated cation channel TRPM5. The protein is Taste receptor type 2 member 103 (Tas2r103) of Mus musculus (Mouse).